The primary structure comprises 635 residues: Threonine--tRNA ligase (635 aa).

One can recognise a TGS domain in the interval 1-61 (MVSIRLPDGS…DRDASLAIVT (61 aa)). Residues 242–533 (DHRKLGKQLD…LIEHHAGAMP (292 aa)) form a catalytic region. Zn(2+) contacts are provided by Cys333, His384, and His510.

This sequence belongs to the class-II aminoacyl-tRNA synthetase family. Homodimer. The cofactor is Zn(2+).

It localises to the cytoplasm. It carries out the reaction tRNA(Thr) + L-threonine + ATP = L-threonyl-tRNA(Thr) + AMP + diphosphate + H(+). Functionally, catalyzes the attachment of threonine to tRNA(Thr) in a two-step reaction: L-threonine is first activated by ATP to form Thr-AMP and then transferred to the acceptor end of tRNA(Thr). Also edits incorrectly charged L-seryl-tRNA(Thr). This Burkholderia vietnamiensis (strain G4 / LMG 22486) (Burkholderia cepacia (strain R1808)) protein is Threonine--tRNA ligase.